The primary structure comprises 475 residues: Sulfate adenylyltransferase subunit 1 (475 aa).

The 215-residue stretch at 25–239 folds into the tr-type G domain; that stretch reads KSLLRFLTCG…EVLETVEIQR (215 aa). The segment at 34 to 41 is G1; that stretch reads GSVDDGKS. 34 to 41 serves as a coordination point for GTP; that stretch reads GSVDDGKS. Residues 92–96 are G2; the sequence is GITID. The interval 113–116 is G3; the sequence is DTPG. GTP contacts are provided by residues 113-117 and 168-171; these read DTPGH and NKMD. A G4 region spans residues 168 to 171; the sequence is NKMD. The tract at residues 206 to 208 is G5; that stretch reads SAL.

Belongs to the TRAFAC class translation factor GTPase superfamily. Classic translation factor GTPase family. CysN/NodQ subfamily. In terms of assembly, heterodimer composed of CysD, the smaller subunit, and CysN.

The catalysed reaction is sulfate + ATP + H(+) = adenosine 5'-phosphosulfate + diphosphate. It participates in sulfur metabolism; hydrogen sulfide biosynthesis; sulfite from sulfate: step 1/3. Its function is as follows. With CysD forms the ATP sulfurylase (ATPS) that catalyzes the adenylation of sulfate producing adenosine 5'-phosphosulfate (APS) and diphosphate, the first enzymatic step in sulfur assimilation pathway. APS synthesis involves the formation of a high-energy phosphoric-sulfuric acid anhydride bond driven by GTP hydrolysis by CysN coupled to ATP hydrolysis by CysD. The protein is Sulfate adenylyltransferase subunit 1 of Shigella flexneri.